The following is a 905-amino-acid chain: Sun domain-containing protein 1 (905 aa).

Disordered regions lie at residues 1–21, 41–166, and 207–242; these read MSGD…LPLQ, NNTV…ILKQ, and QQQQ…IDNN. Residues 1–290 are Nuclear-facing; it reads MSGDYKPNYQ…NNNNKVNFKQ (290 aa). 2 stretches are compositionally biased toward low complexity: residues 41 to 67 and 75 to 101; these read NNTV…SSYL and SNQI…ASSS. Basic and acidic residues predominate over residues 107 to 116; it reads KVDHNSHNNN. The segment covering 117–126 has biased composition (acidic residues); it reads DDDDIEDDVD. The segment covering 129 to 146 has biased composition (polar residues); the sequence is YSTNNASSNILHNRFSNS. Residues 170–221 adopt a coiled-coil conformation; it reads LYNHLNNQIQQQQQQQQQQQQQQQQQQQQQQQQQQQQQQQQQQQRNNNNNSN. Residues 207–227 are compositionally biased toward low complexity; that stretch reads QQQQQQQRNNNNNSNSSNNNN. Residues 291–311 traverse the membrane as a helical segment; the sequence is AIWIFIFSVLFIGCLLGLFST. Residues 312-905 lie on the Perinuclear space side of the membrane; sequence NFYGIHIYFP…IEKQQQSDEL (594 aa). Coiled-coil stretches lie at residues 359–456 and 504–609; these read KKNE…QLIQ and REFN…TQQF. One can recognise an SUN domain in the interval 662-860; the sequence is GASIEYNALH…YRFRVHGYQI (199 aa). The stretch at 864–901 forms a coiled coil; it reads EQEQIQIIQEEQSFKQEEINQQQIEQIEQIEQIEKQQQ.

As to quaternary structure, homodimer and homooligomer.

Its subcellular location is the nucleus membrane. Its function is as follows. May have an important role in defining the spacing of the nuclear envelope lumen. Essential for centrosome attachment to the nucleus, maintenance of correct ploidy, proper mitosis, association of the centromere cluster with the centrosome and the maintenance of genome stability. Requires direct chromatin binding for inner nuclear membrane targeting. This chain is Sun domain-containing protein 1 (sun1), found in Dictyostelium discoideum (Social amoeba).